Consider the following 558-residue polypeptide: Energy-dependent translational throttle protein EttA (558 aa).

ABC transporter domains follow at residues 6 to 256 (YTMK…AVQG) and 322 to 552 (VEVD…RVTH). 38 to 45 (GPNGAGKS) is an ATP binding site. The segment at 94-136 (GDIKIKLDRFNEVAELMATDYTDELMEEMGRLQEELDHADAWD) is arm. The interval 239 to 320 (GNYSTYLEKK…IPVGPRLGNV (82 aa)) is ptIM. An ATP-binding site is contributed by 354 to 361 (GPNGVGKT).

This sequence belongs to the ABC transporter superfamily. ABCF family. Translational throttle EttA subfamily. Monomer. Probably contacts ribosomal proteins L1, L5, L33 and S7, the 16S and 23S rRNA and the P-site containing tRNA(fMet).

Its subcellular location is the cytoplasm. It carries out the reaction ATP + H2O = ADP + phosphate + H(+). Functionally, a translation factor that gates the progression of the 70S ribosomal initiation complex (IC, containing tRNA(fMet) in the P-site) into the translation elongation cycle by using a mechanism sensitive to the ATP/ADP ratio. Binds to the 70S ribosome E-site where it modulates the state of the translating ribosome during subunit translocation. ATP hydrolysis probably frees it from the ribosome, which can enter the elongation phase. The chain is Energy-dependent translational throttle protein EttA from Mycobacterium tuberculosis (strain CDC 1551 / Oshkosh).